The chain runs to 491 residues: Cytochrome P450 2H2 (491 aa).

Heme is bound at residue Cys-436.

Belongs to the cytochrome P450 family. Heme is required as a cofactor.

It is found in the endoplasmic reticulum membrane. The protein resides in the microsome membrane. It carries out the reaction an organic molecule + reduced [NADPH--hemoprotein reductase] + O2 = an alcohol + oxidized [NADPH--hemoprotein reductase] + H2O + H(+). Cytochromes P450 are a group of heme-thiolate monooxygenases. In liver microsomes, this enzyme is involved in an NADPH-dependent electron transport pathway. It oxidizes a variety of structurally unrelated compounds, including steroids, fatty acids, and xenobiotics. The polypeptide is Cytochrome P450 2H2 (CYP2H2) (Gallus gallus (Chicken)).